Consider the following 74-residue polypeptide: Conotoxin Vi15a (74 aa).

The N-terminal stretch at 1–19 (MMPVILLLLLSLAIRCADG) is a signal peptide. A propeptide spanning residues 20 to 43 (KAVQGDSDPSASLLTGDKNHDLPV) is cleaved from the precursor. Trp72 bears the Tryptophan amide mark.

In terms of processing, contains four disulfide bonds. Expressed by the venom duct.

Its subcellular location is the secreted. This is Conotoxin Vi15a from Conus virgo (Virgin cone).